The chain runs to 340 residues: Phosphoribosylformylglycinamidine cyclo-ligase (340 aa).

The protein belongs to the AIR synthase family.

Its subcellular location is the cytoplasm. It catalyses the reaction 2-formamido-N(1)-(5-O-phospho-beta-D-ribosyl)acetamidine + ATP = 5-amino-1-(5-phospho-beta-D-ribosyl)imidazole + ADP + phosphate + H(+). It functions in the pathway purine metabolism; IMP biosynthesis via de novo pathway; 5-amino-1-(5-phospho-D-ribosyl)imidazole from N(2)-formyl-N(1)-(5-phospho-D-ribosyl)glycinamide: step 2/2. The polypeptide is Phosphoribosylformylglycinamidine cyclo-ligase (Streptococcus pneumoniae serotype 19F (strain G54)).